Consider the following 284-residue polypeptide: RNase adapter protein RapZ (284 aa).

8 to 15 is a binding site for ATP; sequence GRSGSGKS. A GTP-binding site is contributed by 56 to 59; it reads DVRN. An RNA-binding region spans residues 266–284; the sequence is RSRGKNVQSRHRTLEKRKT.

Belongs to the RapZ-like family. RapZ subfamily. Homotrimer.

Functionally, modulates the synthesis of GlmS, by affecting the processing and stability of the regulatory small RNA GlmZ. When glucosamine-6-phosphate (GlcN6P) concentrations are high in the cell, RapZ binds GlmZ and targets it to cleavage by RNase E. Consequently, GlmZ is inactivated and unable to activate GlmS synthesis. Under low GlcN6P concentrations, RapZ is sequestered and inactivated by an other regulatory small RNA, GlmY, preventing GlmZ degradation and leading to synthesis of GlmS. The chain is RNase adapter protein RapZ from Salmonella arizonae (strain ATCC BAA-731 / CDC346-86 / RSK2980).